The following is a 76-amino-acid chain: U7-lycotoxin-Ls1c (76 aa).

The first 22 residues, 1 to 22 (MKLIIFTGLALFLLVSLIDVEA), serve as a signal peptide directing secretion. The propeptide occupies 23-26 (QNEG).

It belongs to the neurotoxin 19 (CSTX) family. 07 (U7-Lctx) subfamily. Post-translationally, contains 4 disulfide bonds. In terms of tissue distribution, expressed by the venom gland.

The protein resides in the secreted. The chain is U7-lycotoxin-Ls1c from Lycosa singoriensis (Wolf spider).